We begin with the raw amino-acid sequence, 214 residues long: Cytochrome c biogenesis ATP-binding export protein CcmA (214 aa).

An ABC transporter domain is found at 8-212 (LYAADLACLK…PPTVLDLSEV (205 aa)). 40 to 47 (GPNGFGKT) contributes to the ATP binding site.

This sequence belongs to the ABC transporter superfamily. CcmA exporter (TC 3.A.1.107) family. As to quaternary structure, the complex is composed of two ATP-binding proteins (CcmA) and two transmembrane proteins (CcmB).

It localises to the cell inner membrane. The catalysed reaction is heme b(in) + ATP + H2O = heme b(out) + ADP + phosphate + H(+). In terms of biological role, part of the ABC transporter complex CcmAB involved in the biogenesis of c-type cytochromes; once thought to export heme, this seems not to be the case, but its exact role is uncertain. Responsible for energy coupling to the transport system. The sequence is that of Cytochrome c biogenesis ATP-binding export protein CcmA from Aromatoleum aromaticum (strain DSM 19018 / LMG 30748 / EbN1) (Azoarcus sp. (strain EbN1)).